The sequence spans 44 residues: Cytochrome b559 subunit beta (44 aa).

A helical membrane pass occupies residues 19–35 (WLAIHGIAVPTIFFLGA). Histidine 23 provides a ligand contact to heme.

It belongs to the PsbE/PsbF family. In terms of assembly, heterodimer of an alpha subunit and a beta subunit. PSII is composed of 1 copy each of membrane proteins PsbA, PsbB, PsbC, PsbD, PsbE, PsbF, PsbH, PsbI, PsbJ, PsbK, PsbL, PsbM, PsbT, PsbX, PsbY, PsbZ, Psb30/Ycf12, at least 3 peripheral proteins of the oxygen-evolving complex and a large number of cofactors. It forms dimeric complexes. Heme b is required as a cofactor.

The protein resides in the plastid. Its subcellular location is the chloroplast thylakoid membrane. Its function is as follows. This b-type cytochrome is tightly associated with the reaction center of photosystem II (PSII). PSII is a light-driven water:plastoquinone oxidoreductase that uses light energy to abstract electrons from H(2)O, generating O(2) and a proton gradient subsequently used for ATP formation. It consists of a core antenna complex that captures photons, and an electron transfer chain that converts photonic excitation into a charge separation. This Chlamydomonas reinhardtii (Chlamydomonas smithii) protein is Cytochrome b559 subunit beta.